The primary structure comprises 880 residues: Alanine--tRNA ligase (880 aa).

Zn(2+)-binding residues include His-566, His-570, Cys-668, and His-672.

This sequence belongs to the class-II aminoacyl-tRNA synthetase family. Zn(2+) is required as a cofactor.

The protein resides in the cytoplasm. The enzyme catalyses tRNA(Ala) + L-alanine + ATP = L-alanyl-tRNA(Ala) + AMP + diphosphate. Catalyzes the attachment of alanine to tRNA(Ala) in a two-step reaction: alanine is first activated by ATP to form Ala-AMP and then transferred to the acceptor end of tRNA(Ala). Also edits incorrectly charged Ser-tRNA(Ala) and Gly-tRNA(Ala) via its editing domain. This chain is Alanine--tRNA ligase, found in Parafrankia sp. (strain EAN1pec).